Reading from the N-terminus, the 277-residue chain is Myelin proteolipid protein (277 aa).

At 2-10 the chain is on the cytoplasmic side; that stretch reads GLLECCARC. 3 S-palmitoyl cysteine lipidation sites follow: Cys6, Cys7, and Cys10. Residues 11 to 36 traverse the membrane as a helical segment; sequence LIGAPFASLVATGLCFFGVALFCGCG. Residues 37-59 are Extracellular-facing; that stretch reads HEALTGTEQLIETYFSKNYQDYE. The chain crosses the membrane as a helical span at residues 60–88; that stretch reads YLIDVIHAFQYVIYGTASFFFLYGALLLA. Residues 89-151 are Cytoplasmic-facing; the sequence is EGFYTTGAVR…LGKWLGHPDK (63 aa). S-palmitoyl cysteine attachment occurs at residues Cys109, Cys139, and Cys141. Residues 152–178 traverse the membrane as a helical segment; that stretch reads FVGITYVLTIVWLLAFACSAVPVYIYF. The Extracellular portion of the chain corresponds to 179 to 238; the sequence is NTWTTCQSIAFPTKTTASIGTLCADARMYGVLPWNAFPGKVCGSNLLSICKTSEFQMTFH. Disulfide bonds link Cys184–Cys228 and Cys201–Cys220. The O-palmitoyl threonine moiety is linked to residue Thr199. Residues 239–268 traverse the membrane as a helical segment; sequence LFIAAFVGAAATLVSLLTFMIAATYNFAVL. Topologically, residues 269–277 are cytoplasmic; the sequence is KLMGRGTKF.

Belongs to the myelin proteolipid protein family.

It localises to the cell membrane. Functionally, this is the major myelin protein from the central nervous system. It plays an important role in the formation or maintenance of the multilamellar structure of myelin. In Gallus gallus (Chicken), this protein is Myelin proteolipid protein (PLP1).